The chain runs to 278 residues: Betaine--homocysteine S-methyltransferase 1 (278 aa).

Positions 11–278 (KGILERLNSG…FGLEPRVATR (268 aa)) constitute a Hcy-binding domain. Lys-40, Lys-93, and Lys-98 each carry N6-succinyllysine. Cys-217 lines the Zn(2+) pocket. Lys-232 and Lys-241 each carry N6-succinyllysine.

As to quaternary structure, homotetramer. It depends on Zn(2+) as a cofactor. As to expression, found exclusively in liver and kidney.

Its subcellular location is the cytoplasm. The protein localises to the cytosol. It localises to the nucleus. The enzyme catalyses L-homocysteine + glycine betaine = N,N-dimethylglycine + L-methionine. It functions in the pathway amine and polyamine degradation; betaine degradation; sarcosine from betaine: step 1/2. Its pathway is amino-acid biosynthesis; L-methionine biosynthesis via de novo pathway; L-methionine from L-homocysteine (BhmT route): step 1/1. Inhibited by dimethylglycine and methylthioacetate. Involved in the regulation of homocysteine metabolism. Converts betaine and homocysteine to dimethylglycine and methionine, respectively. This reaction is also required for the irreversible oxidation of choline. This chain is Betaine--homocysteine S-methyltransferase 1, found in Sus scrofa (Pig).